Consider the following 170-residue polypeptide: E1B protein, small T-antigen (170 aa).

Residues 137–170 form a disordered region; it reads PAQPPHGLDPVREEEEEEEEEENLRAGLDPQTEL. The span at 148–158 shows a compositional bias: acidic residues; sequence REEEEEEEEEE.

It belongs to the adenoviridae E1B 19 kDa protein family.

Its subcellular location is the host cell membrane. It is found in the host nucleus envelope. The protein resides in the host nucleus lamina. Its function is as follows. Putative adenovirus Bcl-2 homolog that inhibits apoptosis induced by TNF or FAS pathways, as well as p53-mediated apoptosis. Without E1B 19K function, virus production is compromised because of premature death of host cell. Interacts with Bax protein in cell lysates. The sequence is that of E1B protein, small T-antigen from Homo sapiens (Human).